The primary structure comprises 421 residues: ATP-dependent RNA helicase RhlB (421 aa).

The short motif at 9–37 is the Q motif element; that stretch reads QKFSDFALHPKVVEVLEKKGFHNCTPIQA. One can recognise a Helicase ATP-binding domain in the interval 40–219; sequence LPLTLAGRDV…FEQMNNAEYI (180 aa). 53–60 contributes to the ATP binding site; sequence AQTGTGKT. The DEAD box signature appears at 165-168; that stretch reads DEAD. The Helicase C-terminal domain occupies 245–390; the sequence is RLLQTLIEEE…VSKYNPDALM (146 aa). The tract at residues 392–421 is disordered; sequence DLPKPLRLTRPRTGNGPRRTGAPRNRRRSG. A compositionally biased stretch (low complexity) spans 402-414; that stretch reads PRTGNGPRRTGAP.

This sequence belongs to the DEAD box helicase family. RhlB subfamily. In terms of assembly, component of the RNA degradosome, which is a multiprotein complex involved in RNA processing and mRNA degradation.

It is found in the cytoplasm. The enzyme catalyses ATP + H2O = ADP + phosphate + H(+). Its function is as follows. DEAD-box RNA helicase involved in RNA degradation. Has RNA-dependent ATPase activity and unwinds double-stranded RNA. This is ATP-dependent RNA helicase RhlB from Shigella boydii serotype 18 (strain CDC 3083-94 / BS512).